Reading from the N-terminus, the 188-residue chain is Mitochondrial import inner membrane translocase subunit TIM23-2 (188 aa).

The next 4 helical transmembrane spans lie at 64 to 84, 112 to 131, 138 to 154, and 161 to 178; these read TGTAYLGGSVAGASVGVITGV, GNRIGIIGLVYAGIESGIVA, VWTSVVAGLGTGAVCRA, and AAVAGALGGLAAGAVVAG.

This sequence belongs to the Tim17/Tim22/Tim23 family. In terms of assembly, homomultimer. Component of the TIM17:23 complex at least composed of TIM23, TIM17 and TIM50. The complex interacts with the TIM44 component of the PAM complex. Also part of the NADH-ubiquinone oxidoreductase complex I. Interacts with OEP163, TIM17-2, TIM21, TIM50 and MPPA2. In terms of tissue distribution, expressed in roots and young cotyledons. Detected in leaves and flowers.

It localises to the mitochondrion inner membrane. In terms of biological role, essential component of the TIM17:23 complex, a complex that mediates the translocation of transit peptide-containing proteins across the mitochondrial inner membrane. Links the inner and outer membranes. In Arabidopsis thaliana (Mouse-ear cress), this protein is Mitochondrial import inner membrane translocase subunit TIM23-2 (TIM23-2).